The primary structure comprises 161 residues: uncharacterized protein (161 aa).

This is an uncharacterized protein from Schizosaccharomyces pombe (strain 972 / ATCC 24843) (Fission yeast).